The primary structure comprises 227 residues: GRF-interacting factor 1 (227 aa).

Positions alanine 124–alanine 139 are enriched in low complexity. 2 disordered regions span residues alanine 124–glutamate 160 and glycine 188–serine 227. The span at glutamate 217–serine 227 shows a compositional bias: basic and acidic residues.

The protein belongs to the SS18 family. Interacts with GRF4. In terms of tissue distribution, highly expressed in internodes, nodes, developing spikelets and developing anthers. Expressed at low levels in roots and mature glumes.

It localises to the nucleus. The protein resides in the cytoplasm. Transcription coactivator that plays a role in the regulation of meristematic function in leaves, stems and inflorescences. May regulate leaf size, length of stem internodes, and seed size by promoting cell expansion. Transcription coactivator that plays a role in the regulation of grain size. Component of a network formed by the microRNA396 (miRNA396), the GRFs and their interacting factors (GIFs) acting in the regulation of meristem function, at least partially through the control of cell proliferation. Component of the miRNA396c-GRF4-GIF1 regulatory module that plays an important role in grain size determination. This chain is GRF-interacting factor 1, found in Oryza sativa subsp. japonica (Rice).